Reading from the N-terminus, the 250-residue chain is UPF0524 protein C3orf70 homolog (250 aa).

Residues 201–250 form a disordered region; the sequence is ESCDEDTEEGAELSSEEDYSPESSWEPDECTLLSPSQSDLEVIETIETTV. Residues 202–229 show a composition bias toward acidic residues; that stretch reads SCDEDTEEGAELSSEEDYSPESSWEPDE.

Belongs to the UPF0524 family.

Its function is as follows. May play a role in neuronal and neurobehavioral development. The protein is UPF0524 protein C3orf70 homolog of Bos taurus (Bovine).